The sequence spans 65 residues: MLCLPVFIILLLLASPAAPNPLQTRIQSNLIRAGPEDANIKTDKRVIISGLLASILVPLIDAIKG.

An N-terminal signal peptide occupies residues 1 to 19 (MLCLPVFIILLLLASPAAP). Residues 20–43 (NPLQTRIQSNLIRAGPEDANIKTD) constitute a propeptide that is removed on maturation. Lys64 is modified (lysine amide).

Belongs to the conotoxin T superfamily. Expressed by the venom duct.

The protein localises to the secreted. This Conus ventricosus (Mediterranean cone) protein is Conotoxin VnMLCL-041.